Reading from the N-terminus, the 388-residue chain is Protein RecA (388 aa).

79–86 contributes to the ATP binding site; that stretch reads GPESSGKT. Residues 347–372 are disordered; sequence IDGEEVSEQDTENKKDEPKKEEAVNE. Over residues 357 to 369 the composition is skewed to basic and acidic residues; the sequence is TENKKDEPKKEEA.

The protein belongs to the RecA family.

The protein localises to the cytoplasm. Functionally, can catalyze the hydrolysis of ATP in the presence of single-stranded DNA, the ATP-dependent uptake of single-stranded DNA by duplex DNA, and the ATP-dependent hybridization of homologous single-stranded DNAs. It interacts with LexA causing its activation and leading to its autocatalytic cleavage. This chain is Protein RecA, found in Streptococcus pneumoniae (strain CGSP14).